The following is a 332-amino-acid chain: Protoheme IX farnesyltransferase (332 aa).

Helical transmembrane passes span leucine 63–leucine 83, threonine 109–valine 129, leucine 132–leucine 152, isoleucine 160–glycine 180, tryptophan 188–leucine 208, isoleucine 245–phenylalanine 265, and alanine 286–isoleucine 306.

The protein belongs to the UbiA prenyltransferase family. Protoheme IX farnesyltransferase subfamily.

The protein localises to the cell inner membrane. The catalysed reaction is heme b + (2E,6E)-farnesyl diphosphate + H2O = Fe(II)-heme o + diphosphate. It functions in the pathway porphyrin-containing compound metabolism; heme O biosynthesis; heme O from protoheme: step 1/1. In terms of biological role, converts heme B (protoheme IX) to heme O by substitution of the vinyl group on carbon 2 of heme B porphyrin ring with a hydroxyethyl farnesyl side group. This is Protoheme IX farnesyltransferase from Prochlorococcus marinus (strain MIT 9515).